Consider the following 436-residue polypeptide: Protein Z-dependent protease inhibitor (436 aa).

A signal peptide spans 1–20 (MRVVSSLFLPVLLAEVWLVS). Residues Asn-23, Asn-42, and Asn-69 are each glycosylated (N-linked (GlcNAc...) asparagine). The tract at residues 128 to 145 (AGPLILPALFKRVKETFS) is heparin-binding. N-linked (GlcNAc...) asparagine glycans are attached at residues Asn-172, Asn-189, and Asn-287.

It belongs to the serpin family. In terms of processing, phosphorylated by FAM20C in the extracellular medium. In terms of tissue distribution, expressed by the liver and secreted in plasma.

The protein resides in the secreted. Functionally, inhibits activity of the coagulation protease factor Xa in the presence of PROZ, calcium and phospholipids. Also inhibits factor XIa in the absence of cofactors. The polypeptide is Protein Z-dependent protease inhibitor (Serpina10) (Rattus norvegicus (Rat)).